Here is a 255-residue protein sequence, read N- to C-terminus: tRNA (guanine-N(1)-)-methyltransferase (255 aa).

Residues glycine 114 and 134-139 (IGDYIL) contribute to the S-adenosyl-L-methionine site.

This sequence belongs to the RNA methyltransferase TrmD family. In terms of assembly, homodimer.

It is found in the cytoplasm. It carries out the reaction guanosine(37) in tRNA + S-adenosyl-L-methionine = N(1)-methylguanosine(37) in tRNA + S-adenosyl-L-homocysteine + H(+). Specifically methylates guanosine-37 in various tRNAs. This Blochmanniella pennsylvanica (strain BPEN) protein is tRNA (guanine-N(1)-)-methyltransferase.